Reading from the N-terminus, the 141-residue chain is Hemoglobin subunit alpha-D/D' (141 aa).

The region spanning 1–141 (MLTADDKKLI…VAAVLAEKYR (141 aa)) is the Globin domain. Positions 58 and 87 each coordinate heme b.

Belongs to the globin family. In terms of assembly, heterotetramer of two alpha-D chains and two beta chains. In terms of tissue distribution, red blood cells.

Involved in oxygen transport from the lung to the various peripheral tissues. The sequence is that of Hemoglobin subunit alpha-D/D' (HBAD) from Gyps rueppelli (Rueppell's griffon).